The primary structure comprises 207 residues: ATP phosphoribosyltransferase (207 aa).

Belongs to the ATP phosphoribosyltransferase family. Short subfamily. In terms of assembly, heteromultimer composed of HisG and HisZ subunits.

The protein resides in the cytoplasm. It catalyses the reaction 1-(5-phospho-beta-D-ribosyl)-ATP + diphosphate = 5-phospho-alpha-D-ribose 1-diphosphate + ATP. It functions in the pathway amino-acid biosynthesis; L-histidine biosynthesis; L-histidine from 5-phospho-alpha-D-ribose 1-diphosphate: step 1/9. Functionally, catalyzes the condensation of ATP and 5-phosphoribose 1-diphosphate to form N'-(5'-phosphoribosyl)-ATP (PR-ATP). Has a crucial role in the pathway because the rate of histidine biosynthesis seems to be controlled primarily by regulation of HisG enzymatic activity. This is ATP phosphoribosyltransferase from Geobacillus kaustophilus (strain HTA426).